The sequence spans 201 residues: Casparian strip membrane protein 4 (201 aa).

A disordered region spans residues 1 to 23 (MEGKAAVTTSTEHGDGEASRTAA). Residues 1-41 (MEGKAAVTTSTEHGDGEASRTAARTVVSGSSRGGAASRALS) lie on the Cytoplasmic side of the membrane. A helical membrane pass occupies residues 42-62 (VADLILRVVAVVAIVDSAIAM). Topologically, residues 63–87 (GTTNQTLPFFTQFLRFKAQYSDLPT) are extracellular. N66 carries N-linked (GlcNAc...) asparagine glycosylation. A helical membrane pass occupies residues 88-108 (LTLFVVANSAVTAYLVLSIPL). Residues 109-122 (SVVHIIRSRASYSR) lie on the Cytoplasmic side of the membrane. The chain crosses the membrane as a helical span at residues 123-143 (LVLIFLDSVMLALVAAVASAS). The Extracellular portion of the chain corresponds to 144–172 (AAIVYLAHKGNVRANWFAVCQQFDSFCER). A helical transmembrane segment spans residues 173 to 193 (ISGPLIGSFAAMAVLLLLVLL). Over 194–201 (SAAALARR) the chain is Cytoplasmic.

It belongs to the Casparian strip membrane proteins (CASP) family. In terms of assembly, homodimer and heterodimers.

Its subcellular location is the cell membrane. Its function is as follows. Regulates membrane-cell wall junctions and localized cell wall deposition. Required for establishment of the Casparian strip membrane domain (CSD) and the subsequent formation of Casparian strips, a cell wall modification of the root endodermis that determines an apoplastic barrier between the intraorganismal apoplasm and the extraorganismal apoplasm and prevents lateral diffusion. The sequence is that of Casparian strip membrane protein 4 from Oryza sativa subsp. japonica (Rice).